Here is a 142-residue protein sequence, read N- to C-terminus: Large ribosomal subunit protein uL13 (142 aa).

The protein belongs to the universal ribosomal protein uL13 family. Part of the 50S ribosomal subunit.

In terms of biological role, this protein is one of the early assembly proteins of the 50S ribosomal subunit, although it is not seen to bind rRNA by itself. It is important during the early stages of 50S assembly. The protein is Large ribosomal subunit protein uL13 of Shewanella denitrificans (strain OS217 / ATCC BAA-1090 / DSM 15013).